The primary structure comprises 356 residues: MRVTDFSFELPESLIAHYPMPERSSCRLLSLDGPTGALTHGTFTDLLDKLNPGDLLVFNNTRVIPARLFGRKASGGKIEVLVERMLDDKRILAHIRASKAPKPGAELLLGDDESINATMTARHGALFEVEFNDERSVLDILNSIGHMPLPPYIDRPDEDADRELYQTVYSEKPGAVAAPTAGLHFDEPLLEKLRAKGVEMAFVTLHVGAGTFQPVRVDTIEDHIMHSEYAEVPQDVVDAVLAAKARGNRVIAVGTTSVRSLESAAQAAKNDLIEPFFDDTQIFIYPGFQYKVVDALVTNFHLPESTLIMLVSAFAGYQHTMNAYKAAVEEKYRFFSYGDAMFITYNPQAINERVGE.

This sequence belongs to the QueA family. Monomer.

The protein localises to the cytoplasm. The catalysed reaction is 7-aminomethyl-7-carbaguanosine(34) in tRNA + S-adenosyl-L-methionine = epoxyqueuosine(34) in tRNA + adenine + L-methionine + 2 H(+). The protein operates within tRNA modification; tRNA-queuosine biosynthesis. In terms of biological role, transfers and isomerizes the ribose moiety from AdoMet to the 7-aminomethyl group of 7-deazaguanine (preQ1-tRNA) to give epoxyqueuosine (oQ-tRNA). In Shigella dysenteriae serotype 1 (strain Sd197), this protein is S-adenosylmethionine:tRNA ribosyltransferase-isomerase.